A 430-amino-acid chain; its full sequence is Serine hydroxymethyltransferase (430 aa).

Residues leucine 123 and glycine 127–leucine 129 contribute to the (6S)-5,6,7,8-tetrahydrofolate site. Lysine 232 bears the N6-(pyridoxal phosphate)lysine mark. Glutamate 248 lines the (6S)-5,6,7,8-tetrahydrofolate pocket.

Belongs to the SHMT family. Homodimer. Requires pyridoxal 5'-phosphate as cofactor.

The protein resides in the cytoplasm. The enzyme catalyses (6R)-5,10-methylene-5,6,7,8-tetrahydrofolate + glycine + H2O = (6S)-5,6,7,8-tetrahydrofolate + L-serine. Its pathway is one-carbon metabolism; tetrahydrofolate interconversion. It participates in amino-acid biosynthesis; glycine biosynthesis; glycine from L-serine: step 1/1. Catalyzes the reversible interconversion of serine and glycine with tetrahydrofolate (THF) serving as the one-carbon carrier. This reaction serves as the major source of one-carbon groups required for the biosynthesis of purines, thymidylate, methionine, and other important biomolecules. Also exhibits THF-independent aldolase activity toward beta-hydroxyamino acids, producing glycine and aldehydes, via a retro-aldol mechanism. This is Serine hydroxymethyltransferase from Anaplasma marginale (strain Florida).